The chain runs to 295 residues: Carbapenem-hydrolyzing beta-lactamase transcriptional activator (295 aa).

The region spanning leucine 5–threonine 62 is the HTH lysR-type domain. The segment at residues phenylalanine 22–arginine 41 is a DNA-binding region (H-T-H motif).

The protein belongs to the LysR transcriptional regulatory family.

This protein is a positive regulator of gene expression of carbapenem-hydrolyzing beta-lactamase (NmcA). This Enterobacter cloacae protein is Carbapenem-hydrolyzing beta-lactamase transcriptional activator (nmcR).